We begin with the raw amino-acid sequence, 570 residues long: Ribosome-inactivating protein SNAIf (570 aa).

Positions 1–28 are cleaved as a signal peptide; it reads MRVVTKLLYLVVLAICGLGIHGALTHTR. Residues asparagine 40, asparagine 62, and asparagine 140 are each glycosylated (N-linked (GlcNAc...) asparagine). Residue glutamate 199 is part of the active site. Asparagine 232 carries N-linked (GlcNAc...) asparagine glycosylation. Disulfide bonds link cysteine 284/cysteine 316, cysteine 332/cysteine 351, and cysteine 373/cysteine 385. 2 Ricin B-type lectin domains span residues 319 to 439 and 441 to 566; these read VEVT…WTVG and VEPL…WITT. The 1-alpha repeat unit spans residues 329-369; the sequence is DGLCVDVRDGHYIDGNTVQLGPCGNECNQLWTFRTDGTIRW. One copy of the 1-beta repeat lies at 370–405; it reads LGKCLTTSSSVMIYDCNTVPPEATKWVVSTDGTITN. The 1-gamma repeat unit spans residues 408–440; the sequence is SGLVLTAPQAAEGTALSLENNIHAARQGWTVGD. Residues 452 to 489 form a 2-alpha repeat; it reads KQMCLTENGENNFVWLEDCVLNRVEQEWALYGDGTIRV. Residues cysteine 455 and cysteine 470 are joined by a disulfide bond. An N-linked (GlcNAc...) asparagine glycan is attached at asparagine 492. A 2-beta repeat occupies 493–531; that stretch reads RSLCVTSEDHEPSDLIVILKCEGSGNQRWVFNTNGTISN. A disulfide bond links cysteine 496 and cysteine 513. 2 N-linked (GlcNAc...) asparagine glycosylation sites follow: asparagine 526 and asparagine 544. The stretch at 534 to 567 is one 2-gamma repeat; that stretch reads AKLVMDVAQSNVSLRKIILYPPTGNPNQQWITTT.

Belongs to the ribosome-inactivating protein family. Type 2 RIP subfamily. Tetramer of four pairs of disulfide bound A-B chains. The precursor is processed in two chains, A and B, that are linked by a disulfide bond. A small truncated form corresponding roughly to the second ricin B-type lectin domain of the B chain, TrSNAIf, can also be produced. In terms of processing, N-glycosylated. In terms of tissue distribution, expressed in fruits.

It carries out the reaction Endohydrolysis of the N-glycosidic bond at one specific adenosine on the 28S rRNA.. Functionally, neu5Ac(alpha2-6)Gal/GalNAc specific agglutinin. Behaves as a type-2 ribosome-inactivating protein. Strongly inhibits mammalian but not plant ribosomes. The A chain is responsible for inhibiting protein synthesis through the catalytic inactivation of 60S ribosomal subunits by removing adenine from position 4,324 of 28S rRNA. The B chain binds to cell receptors and probably facilitates the entry into the cell of the A chain; B chains are also responsible for cell agglutination (lectin activity). Involved in plant defense against insects. Binds Neu5Ac(alpha2-6)Gal/GalNAc but has no clear agglutination activity. The polypeptide is Ribosome-inactivating protein SNAIf (Sambucus nigra (European elder)).